A 375-amino-acid polypeptide reads, in one-letter code: D-alanine--D-alanine ligase (375 aa).

The ATP-grasp domain occupies 145–348 (KRLLRDADLE…YPALITRLIE (204 aa)). 175–230 (ITYLGSSLFVKPANQGSSVGVSKVINRISFDQALALAFCFDDKVLVESAINGRELE) is an ATP binding site. Asp-302, Glu-315, and Asn-317 together coordinate Mg(2+).

The protein belongs to the D-alanine--D-alanine ligase family. Mg(2+) serves as cofactor. Mn(2+) is required as a cofactor.

It localises to the cytoplasm. It carries out the reaction 2 D-alanine + ATP = D-alanyl-D-alanine + ADP + phosphate + H(+). Its pathway is cell wall biogenesis; peptidoglycan biosynthesis. In terms of biological role, cell wall formation. This is D-alanine--D-alanine ligase from Baumannia cicadellinicola subsp. Homalodisca coagulata.